A 464-amino-acid polypeptide reads, in one-letter code: NADH-quinone oxidoreductase subunit N (464 aa).

A run of 13 helical transmembrane segments spans residues 5–25 (MLLA…VLFL), 31–51 (LLSA…PASL), 63–83 (LFAR…CLLS), 96–116 (EYAA…ASTS), 117–137 (LVSL…LIAV), 152–172 (LLPG…VYAA), 188–208 (GAPM…AAAF), 242–262 (VFAV…RPLL), 286–303 (MLAY…LAVL), 312–332 (AGLF…GLLA), 358–378 (AVLL…AGFM), 393–415 (VGLV…RPVL), and 436–456 (LIFV…GPFF).

It belongs to the complex I subunit 2 family. As to quaternary structure, NDH-1 is composed of 14 different subunits. Subunits NuoA, H, J, K, L, M, N constitute the membrane sector of the complex.

Its subcellular location is the cell inner membrane. The catalysed reaction is a quinone + NADH + 5 H(+)(in) = a quinol + NAD(+) + 4 H(+)(out). Functionally, NDH-1 shuttles electrons from NADH, via FMN and iron-sulfur (Fe-S) centers, to quinones in the respiratory chain. The immediate electron acceptor for the enzyme in this species is believed to be ubiquinone. Couples the redox reaction to proton translocation (for every two electrons transferred, four hydrogen ions are translocated across the cytoplasmic membrane), and thus conserves the redox energy in a proton gradient. The polypeptide is NADH-quinone oxidoreductase subunit N (Syntrophotalea carbinolica (strain DSM 2380 / NBRC 103641 / GraBd1) (Pelobacter carbinolicus)).